Reading from the N-terminus, the 95-residue chain is MLHTLHRSPWLTDFAALLRLLSEGDELLLLQDGVTAAVDGNRYLESLRNAPIKVYALNEDLIARGLTGQISNDIILIDYTDFVRLTVKHPSQMVW.

This sequence belongs to the DsrH/TusB family. In terms of assembly, heterohexamer, formed by a dimer of trimers. The hexameric TusBCD complex contains 2 copies each of TusB, TusC and TusD. The TusBCD complex interacts with TusE.

It is found in the cytoplasm. Part of a sulfur-relay system required for 2-thiolation of 5-methylaminomethyl-2-thiouridine (mnm(5)s(2)U) at tRNA wobble positions. This is Protein TusB from Escherichia coli (strain ATCC 8739 / DSM 1576 / NBRC 3972 / NCIMB 8545 / WDCM 00012 / Crooks).